A 315-amino-acid chain; its full sequence is Methionyl-tRNA formyltransferase (315 aa).

Residue 110 to 113 (SLLP) participates in (6S)-5,6,7,8-tetrahydrofolate binding.

Belongs to the Fmt family.

The catalysed reaction is L-methionyl-tRNA(fMet) + (6R)-10-formyltetrahydrofolate = N-formyl-L-methionyl-tRNA(fMet) + (6S)-5,6,7,8-tetrahydrofolate + H(+). Its function is as follows. Attaches a formyl group to the free amino group of methionyl-tRNA(fMet). The formyl group appears to play a dual role in the initiator identity of N-formylmethionyl-tRNA by promoting its recognition by IF2 and preventing the misappropriation of this tRNA by the elongation apparatus. This is Methionyl-tRNA formyltransferase from Mycolicibacterium paratuberculosis (strain ATCC BAA-968 / K-10) (Mycobacterium paratuberculosis).